Here is a 633-residue protein sequence, read N- to C-terminus: MAPAIQANSNGTMNVNGKCRDGHTAEQRNVMDDALPIEITVEERGKAFAKDPWAHEYSVSEQALRDQERLIDQYHHKVLIVGAGHGGLLFAVRLLQTGNFGINDILIVDEAAGFGGTWYWNRYPGLMCDTESYIYMPLLEETGYMPREKYASGPELRANAERISHLWGLKRRALFRTAIKALDWNDAQGQWKATAQGLGKLQQVKLSADFAIIATGLYASPRIPDFPGLWNYKGPVFHPARWDYSVTGGTPERPEMTRLHNKRVAIVGTGASAVQIVPQLARHSKHLMVFQRTPSGVDQRDNCYTDKARWKEIASTKGWQRQRMENFNAFIGDPKSAPAVNMVGDRWTSMPSYSMTIGANGITKPGYQDEMREMDSIRQGKIRSRVHAIVHNPARADILSPNYPGWCKRPCFHDDYLAAFNEPNVDLVDLQGKGSISFTATGLAVADTQYEADVVIVSTGYTSPKDRSSPGSRANIAITGRGGLEMERKWESGLSTLHGVMTRDFPNLFFPGPAQSGVCTNQTYTLDQLARHVAYIMARGIQQCNGQAMVVEPSEEAERAWADQVVQRAGDSLTAFAACTSTSLFSAAKMTKDQIMNAARLTTWREGIASYVIELEAWRSEGTLQGLEIKRLA.

FAD contacts are provided by residues 117 to 120, 129 to 130, and Tyr-135; these read TWYW and DT. NADP(+) is bound at residue 127-129; it reads MCD. NADP(+) contacts are provided by residues 269–275 and 292–293; these read TGASAVQ and RT.

It belongs to the FAD-binding monooxygenase family. The cofactor is FAD.

It functions in the pathway secondary metabolite biosynthesis; terpenoid biosynthesis. Functionally, FAD-binding monooxygenase; part of the gene cluster that mediates the biosynthesis of anditomin, a fungal meroterpenoid. The first step of the pathway is the synthesis of 3,5-dimethylorsellinic acid (DMOA) by the polyketide synthase andM. DMOA is then converted to the phthalide compound 5,7-dihydroxy-4,6-dimethylphthalide (DHDMP) by the cytochrome P450 monooxygenase andK, which is further prenylated by the prenyltransferase andD to yield farnesyl-DHDMP. Further epoxidation by the FAD-dependent monooxygenase andE leads to epoxyfarnesyl-DHDMP. The next step involves the terpene cyclase andB that converts epoxyfarnesyl-DHDMP into preandiloid A through opening of the epoxide ring followed by the cyclization of the farnesyl moiety. Preandiloid A is in turn oxidized at the C-3 hydroxyl group to yield preandiloid B by the dehydrogenase andC. The dioxygenase andA is solely responsible for the dehydrogenation of preandiloid B leading to the enone preandiloid C, as well as for the intriguing structural rearrangement to generate the bicyclo[2.2.2]octane core, transforming preandiloid C into andiconin. FAD-binding monooxygenase andJ then produces andilesin D which is reduced by dehydrogenase andI to yield andilesin A. Action of acetyltransferase andG followed by a spontaneous acetate elimination leads then to andilesin B, which is in turn substrate of the short chain dehydrogenase andH to yield andilesin C. Finally, the dioxygenase andF catalyzes the transformation of andilesin C to anditomin. This Emericella variicolor (Aspergillus stellatus) protein is FAD-binding monooxygenase andJ.